A 284-amino-acid chain; its full sequence is Nucleotide-binding protein Shal_3708 (284 aa).

Position 8-15 (8-15) interacts with ATP; that stretch reads GRSGSGKS. Residue 56–59 participates in GTP binding; that stretch reads DIRN.

Belongs to the RapZ-like family.

Functionally, displays ATPase and GTPase activities. This is Nucleotide-binding protein Shal_3708 from Shewanella halifaxensis (strain HAW-EB4).